Reading from the N-terminus, the 106-residue chain is Flagellar transcriptional regulator FlhD (106 aa).

This sequence belongs to the FlhD family. Homodimer; disulfide-linked. Forms a heterohexamer composed of two FlhC and four FlhD subunits. Each FlhC binds a FlhD dimer, forming a heterotrimer, and a hexamer assembles by dimerization of two heterotrimers.

It is found in the cytoplasm. Functionally, functions in complex with FlhC as a master transcriptional regulator that regulates transcription of several flagellar and non-flagellar operons by binding to their promoter region. Activates expression of class 2 flagellar genes, including fliA, which is a flagellum-specific sigma factor that turns on the class 3 genes. Also regulates genes whose products function in a variety of physiological pathways. In Burkholderia pseudomallei (strain 1710b), this protein is Flagellar transcriptional regulator FlhD.